We begin with the raw amino-acid sequence, 678 residues long: MTDYSKATDGTKVIHDDPWLEPYKEVIKRRHNQVKNTIQKLEESEGSLLKFSQGYEYFGFNVTKDGVNYREWLPSAHEVYLVGDFNQWNKTSHPLERDNYGRWSIFIPNNSNGECAIPHGSKIKIYLKLANGNFDYRIPAWIKRVEQTKENPVFDGVFWNPSKQYVFKNKSPMKPTELRIYEAHVGMSSELPEISTYSKFKDTVLPMVKELGYNCIQLMAVMEHAYYASFGYQVTNFFAISSRFGTPEELKEMIDKAHEMGLLVFLDVVHSHASKNVLDGLNQLDGTDHHYFHSGGRGNHELWDSRLFNYGNWEVMRFLLSNLRFYVDEYHFDGFRFDGVTSMIYTHHGLSPACSYDDYFGGAVDEDALNYLTLANVMLHTLNPSIVTIAEEVTGLATLCRPFSEGGGDFDYRLAMGIPDKWIELVKEKKDEDWNMGTIAHMLSNRRYKEKNIAYAESHDQSLVGDKTLAFWLMDKEMYTNMSVTTEETPIIDRGMSLHKMIRLITSSLGGDGYLNFMGNEFGHPEWVDFPREGNNNSLHHARRRWDLYRNPLLRYKQLRDFDIAMNKAEQEFRWLSSDFAYISLKHEDDKIIVFERASLIFIFNFHPSKSFSDYRIGSGVPGKFINVLDSDRKEFGGHVRIGKDNYHYTEDKPWHDRKYSLLIYIPSRTCLVLKKVD.

Residues Trp88 and Lys124 each contribute to the (1,4-alpha-D-glucosyl)n site. Asp338 (nucleophile) is an active-site residue. Glu391 functions as the Proton donor in the catalytic mechanism.

This sequence belongs to the glycosyl hydrolase 13 family. GlgB subfamily. As to quaternary structure, monomer.

The catalysed reaction is Transfers a segment of a (1-&gt;4)-alpha-D-glucan chain to a primary hydroxy group in a similar glucan chain.. It participates in glycan biosynthesis; glycogen biosynthesis. In terms of biological role, glycogen-branching enzyme participates in the glycogen biosynthetic process along with glycogenin and glycogen synthase. Generates alpha-1,6-glucosidic branches from alpha-1,4-linked glucose chains, to increase solubility of the glycogen polymer. In Dictyostelium discoideum (Social amoeba), this protein is 1,4-alpha-glucan-branching enzyme (glgB).